A 467-amino-acid polypeptide reads, in one-letter code: ATP-dependent protease ATPase subunit HslU (467 aa).

Residues I20, 62-67 (GVGKTE), D280, E345, and R417 each bind ATP.

This sequence belongs to the ClpX chaperone family. HslU subfamily. As to quaternary structure, a double ring-shaped homohexamer of HslV is capped on each side by a ring-shaped HslU homohexamer. The assembly of the HslU/HslV complex is dependent on binding of ATP.

The protein localises to the cytoplasm. In terms of biological role, ATPase subunit of a proteasome-like degradation complex; this subunit has chaperone activity. The binding of ATP and its subsequent hydrolysis by HslU are essential for unfolding of protein substrates subsequently hydrolyzed by HslV. HslU recognizes the N-terminal part of its protein substrates and unfolds these before they are guided to HslV for hydrolysis. The sequence is that of ATP-dependent protease ATPase subunit HslU from Ligilactobacillus salivarius (strain UCC118) (Lactobacillus salivarius).